Reading from the N-terminus, the 176-residue chain is Ribosome maturation factor RimM (176 aa).

A PRC barrel domain is found at 93–170 (DGEYYHADLI…ELPTEIEGDT (78 aa)).

The protein belongs to the RimM family. Binds ribosomal protein uS19.

It is found in the cytoplasm. Functionally, an accessory protein needed during the final step in the assembly of 30S ribosomal subunit, possibly for assembly of the head region. Essential for efficient processing of 16S rRNA. May be needed both before and after RbfA during the maturation of 16S rRNA. It has affinity for free ribosomal 30S subunits but not for 70S ribosomes. In Rhodopseudomonas palustris (strain BisB5), this protein is Ribosome maturation factor RimM.